The chain runs to 181 residues: MDDLTAQALKDFTARYCDAWHEEHKSWPLSEELYGVPSPCIISTTEDAVYWQPQPFTGEQNVNAVERAFDIVIQPTIHTFYTTQFAGDMHAQFGDIKLTLLQTWSEDDFRRVQENLIGHLVTQKRLKLPPTLFIATLEEELEVISVCNLSGEVCKETLGTRKRTHLASNLAEFLNQLKPLL.

Belongs to the Syd family.

Its subcellular location is the cell inner membrane. In terms of biological role, interacts with the SecY protein in vivo. May bind preferentially to an uncomplexed state of SecY, thus functioning either as a chelating agent for excess SecY in the cell or as a regulatory factor that negatively controls the translocase function. This Escherichia coli (strain K12 / DH10B) protein is Protein Syd.